Here is a 322-residue protein sequence, read N- to C-terminus: MNGKTIILANPRGFCAGVDRAISIVERALEEFGAPIYVRHEVVHNKFVVDNLREKGAVFIEDLAEVPPGATLIYSAHGVSKAVQQEAAERGFRVFDATCPLVTKVHKEVARLDAQDCEIIMIGHKGHVEVEGTMGQLAPGKMLLVETVGDVAKLEVRNPDKLAYVSQTTLSVDETKDIIAALNARFPNIRNPHKEDICYATTNRQTAVKELAEQCDIVIVVGSPNSSNSNRLREVAAGIGTDAYMVDNASYLQRAWFEGKNKVGVTAGASAPEVLVQEVLATIRRWGHETVREGEGAEESIVFVLPKELRREGETKPDLCKR.

Cys-15 contributes to the [4Fe-4S] cluster binding site. (2E)-4-hydroxy-3-methylbut-2-enyl diphosphate is bound by residues His-44 and His-77. Positions 44 and 77 each coordinate dimethylallyl diphosphate. Isopentenyl diphosphate is bound by residues His-44 and His-77. Residue Cys-99 coordinates [4Fe-4S] cluster. His-127 is a (2E)-4-hydroxy-3-methylbut-2-enyl diphosphate binding site. His-127 is a binding site for dimethylallyl diphosphate. Residue His-127 participates in isopentenyl diphosphate binding. Glu-129 functions as the Proton donor in the catalytic mechanism. Residue Thr-168 participates in (2E)-4-hydroxy-3-methylbut-2-enyl diphosphate binding. Cys-198 contributes to the [4Fe-4S] cluster binding site. Residues Ser-226, Ser-227, Asn-228, and Ser-270 each coordinate (2E)-4-hydroxy-3-methylbut-2-enyl diphosphate. Dimethylallyl diphosphate is bound by residues Ser-226, Ser-227, Asn-228, and Ser-270. Isopentenyl diphosphate is bound by residues Ser-226, Ser-227, Asn-228, and Ser-270.

Belongs to the IspH family. The cofactor is [4Fe-4S] cluster.

The enzyme catalyses isopentenyl diphosphate + 2 oxidized [2Fe-2S]-[ferredoxin] + H2O = (2E)-4-hydroxy-3-methylbut-2-enyl diphosphate + 2 reduced [2Fe-2S]-[ferredoxin] + 2 H(+). It carries out the reaction dimethylallyl diphosphate + 2 oxidized [2Fe-2S]-[ferredoxin] + H2O = (2E)-4-hydroxy-3-methylbut-2-enyl diphosphate + 2 reduced [2Fe-2S]-[ferredoxin] + 2 H(+). It participates in isoprenoid biosynthesis; dimethylallyl diphosphate biosynthesis; dimethylallyl diphosphate from (2E)-4-hydroxy-3-methylbutenyl diphosphate: step 1/1. Its pathway is isoprenoid biosynthesis; isopentenyl diphosphate biosynthesis via DXP pathway; isopentenyl diphosphate from 1-deoxy-D-xylulose 5-phosphate: step 6/6. In terms of biological role, catalyzes the conversion of 1-hydroxy-2-methyl-2-(E)-butenyl 4-diphosphate (HMBPP) into a mixture of isopentenyl diphosphate (IPP) and dimethylallyl diphosphate (DMAPP). Acts in the terminal step of the DOXP/MEP pathway for isoprenoid precursor biosynthesis. The sequence is that of 4-hydroxy-3-methylbut-2-enyl diphosphate reductase from Neisseria meningitidis serogroup C (strain 053442).